The chain runs to 317 residues: AT-hook motif nuclear-localized protein 22 (317 aa).

Disordered regions lie at residues 22-41 (HHQF…HDID) and 48-106 (LKRD…KPPI). Positions 26-35 (QHQQQQQQQN) are enriched in low complexity. A compositionally biased stretch (basic and acidic residues) spans 48–64 (LKRDRDADIDPNEHSSA). The segment covering 72-84 (GSGGESGGGGGGD) has biased composition (gly residues). Residues 89-101 (RRPRGRPAGSKNK) constitute a DNA-binding region (a.T hook). Residues 113–253 (ANALKSHVME…EDDQEEQTAG (141 aa)) enclose the PPC domain. Residues 258 to 285 (NIDGNATMGGGTQTQTQTQQQQQQQLMQ) are disordered. Low complexity predominate over residues 270-282 (QTQTQTQQQQQQQ).

In terms of assembly, homodimer. Interacts with HDA1/HDA19, HDA6 and HDA9. In terms of tissue distribution, expressed at the hypocotyl-root transition zone and the root hair zone. Also detected in the inflorescence.

The protein resides in the nucleus. Functionally, transcription factor that specifically binds AT-rich DNA sequences related to the nuclear matrix attachment regions (MARs). Binds an AT-rich DNA sequences in the FLOWERING LOCUS T (FT) promoter. Acts redundantly with AHL18, AHL27 and AHL29 in the regulation of flowering and regulation of the hypocotyl elongation. Plays a role in both photo- and skotomorphogenesis. Acts as a chromatin remodeling factor that modifies the architecture of FLOWERING LOCUS T (FT) chromatin by modulating both H3 acetylation and methylation leading to the regulation of FT expression during flowering induction. The protein is AT-hook motif nuclear-localized protein 22 of Arabidopsis thaliana (Mouse-ear cress).